The primary structure comprises 166 residues: uncharacterized protein (166 aa).

The chain crosses the membrane as a helical span at residues 34 to 54; the sequence is FWGKVLVLTFGIICVVFVIFM. Disordered stretches follow at residues 73 to 93 and 123 to 166; these read QRTQHSIHRRERSSSGASQQF and TSTP…NDEV.

It is found in the vacuole membrane. This is an uncharacterized protein from Schizosaccharomyces pombe (strain 972 / ATCC 24843) (Fission yeast).